The sequence spans 426 residues: DNA polymerase processivity factor component OPG148 (426 aa).

The protein belongs to the orthopoxvirus OPG148 family. As to quaternary structure, interacts with the DNA polymerase catalytic subunit OPG071. Interacts with UDG/OPG116. Component of the uracil-DNA glycosylase(UDG)-OPG148-polymerase complex; OPG148 and UDG form a heterodimeric processivity factor that associates with OPG071 to form the processive polymerase holoenzyme. Interacts with OPG117.

In terms of biological role, plays an essential role in viral DNA replication by acting as the polymerase processivity factor together with protein OPG116. Serves as a bridge which links the DNA polymerase OPG071 and the uracil DNA glycosylase. The polypeptide is DNA polymerase processivity factor component OPG148 (OPG148) (Variola virus (isolate Human/India/Ind3/1967) (VARV)).